Consider the following 394-residue polypeptide: Elongation factor Tu (394 aa).

The tr-type G domain occupies 10 to 204 (KPHVNVGTIG…ALDSYIPTPE (195 aa)). Positions 19-26 (GHVDHGKT) are G1. 19 to 26 (GHVDHGKT) is a binding site for GTP. Thr26 is a binding site for Mg(2+). The tract at residues 60 to 64 (GITIN) is G2. Residues 81–84 (DCPG) are G3. GTP contacts are provided by residues 81 to 85 (DCPGH) and 136 to 139 (NKCD). The segment at 136–139 (NKCD) is G4. The segment at 174–176 (SAL) is G5.

The protein belongs to the TRAFAC class translation factor GTPase superfamily. Classic translation factor GTPase family. EF-Tu/EF-1A subfamily. Monomer.

The protein localises to the cytoplasm. The catalysed reaction is GTP + H2O = GDP + phosphate + H(+). GTP hydrolase that promotes the GTP-dependent binding of aminoacyl-tRNA to the A-site of ribosomes during protein biosynthesis. This is Elongation factor Tu from Neisseria gonorrhoeae (strain ATCC 700825 / FA 1090).